Reading from the N-terminus, the 244-residue chain is Small ribosomal subunit protein uS3 (244 aa).

Positions 39–107 constitute a KH type-2 domain; sequence VREMLRKKLA…PAHINVTEVR (69 aa). The interval 213–244 is disordered; it reads VGQEKQDDSPRNDRNDRGDRGDRPSRPAREAR. Over residues 216 to 244 the composition is skewed to basic and acidic residues; that stretch reads EKQDDSPRNDRNDRGDRGDRPSRPAREAR.

Belongs to the universal ribosomal protein uS3 family. In terms of assembly, part of the 30S ribosomal subunit. Forms a tight complex with proteins S10 and S14.

Binds the lower part of the 30S subunit head. Binds mRNA in the 70S ribosome, positioning it for translation. The protein is Small ribosomal subunit protein uS3 of Xanthomonas oryzae pv. oryzae (strain MAFF 311018).